The primary structure comprises 168 residues: Photosystem I assembly protein Ycf3 (168 aa).

TPR repeat units lie at residues 35–68 (AFTY…EIDP), 72–105 (SYIL…NPSL), and 120–153 (GEQA…APSN).

This sequence belongs to the Ycf3 family.

The protein localises to the plastid. It localises to the chloroplast thylakoid membrane. Its function is as follows. Essential for the assembly of the photosystem I (PSI) complex. May act as a chaperone-like factor to guide the assembly of the PSI subunits. This is Photosystem I assembly protein Ycf3 from Physcomitrium patens (Spreading-leaved earth moss).